A 132-amino-acid chain; its full sequence is Small ribosomal subunit protein uS8 (132 aa).

The protein belongs to the universal ribosomal protein uS8 family. As to quaternary structure, part of the 30S ribosomal subunit. Contacts proteins S5 and S12.

Its function is as follows. One of the primary rRNA binding proteins, it binds directly to 16S rRNA central domain where it helps coordinate assembly of the platform of the 30S subunit. This is Small ribosomal subunit protein uS8 from Xanthobacter autotrophicus (strain ATCC BAA-1158 / Py2).